A 211-amino-acid chain; its full sequence is LexA repressor (211 aa).

The H-T-H motif DNA-binding region spans 27 to 47 (QTEIARAFGFKGVRAVQHHLD). Residues serine 131 and lysine 168 each act as for autocatalytic cleavage activity in the active site.

The protein belongs to the peptidase S24 family. Homodimer.

The catalysed reaction is Hydrolysis of Ala-|-Gly bond in repressor LexA.. In terms of biological role, represses a number of genes involved in the response to DNA damage (SOS response), including recA and lexA. In the presence of single-stranded DNA, RecA interacts with LexA causing an autocatalytic cleavage which disrupts the DNA-binding part of LexA, leading to derepression of the SOS regulon and eventually DNA repair. This is LexA repressor from Xylella fastidiosa (strain M23).